The chain runs to 335 residues: Anthranilate phosphoribosyltransferase (335 aa).

5-phospho-alpha-D-ribose 1-diphosphate-binding positions include Gly79, 82 to 83 (GD), Thr87, 89 to 92 (NIST), 107 to 115 (KHGSRSVSS), and Ser119. Residue Gly79 coordinates anthranilate. Mg(2+) is bound at residue Ser91. Arg165 is a binding site for anthranilate. Mg(2+) contacts are provided by Asp223 and Glu224.

It belongs to the anthranilate phosphoribosyltransferase family. In terms of assembly, homodimer. Mg(2+) is required as a cofactor.

The catalysed reaction is N-(5-phospho-beta-D-ribosyl)anthranilate + diphosphate = 5-phospho-alpha-D-ribose 1-diphosphate + anthranilate. The protein operates within amino-acid biosynthesis; L-tryptophan biosynthesis; L-tryptophan from chorismate: step 2/5. Functionally, catalyzes the transfer of the phosphoribosyl group of 5-phosphorylribose-1-pyrophosphate (PRPP) to anthranilate to yield N-(5'-phosphoribosyl)-anthranilate (PRA). The polypeptide is Anthranilate phosphoribosyltransferase (Helicobacter pylori (strain Shi470)).